The primary structure comprises 138 residues: Large ribosomal subunit protein bL19 (138 aa).

The protein belongs to the bacterial ribosomal protein bL19 family.

This protein is located at the 30S-50S ribosomal subunit interface and may play a role in the structure and function of the aminoacyl-tRNA binding site. The polypeptide is Large ribosomal subunit protein bL19 (Leptospira interrogans serogroup Icterohaemorrhagiae serovar Lai (strain 56601)).